We begin with the raw amino-acid sequence, 221 residues long: uncharacterized protein (221 aa).

Residues 77 to 96 constitute a DNA-binding region (H-T-H motif); the sequence is YRERAVELGVPERAILVEPN.

This sequence to E.coli YdcF.

The imp locus inhibits the extrachromosomal maintenance of the streptomyces plasmid SLP1. May function as a transcriptional activator. This is an uncharacterized protein from Streptomyces coelicolor (strain ATCC BAA-471 / A3(2) / M145).